The chain runs to 249 residues: uncharacterized protein (249 aa).

11–34 (IFGGRSQIGGELARRLAAGATMVL) provides a ligand contact to NADP(+). S142 serves as a coordination point for substrate. Y155 serves as the catalytic Proton acceptor.

The protein belongs to the short-chain dehydrogenases/reductases (SDR) family.

This is an uncharacterized protein from Mycobacterium tuberculosis (strain ATCC 25618 / H37Rv).